The following is a 336-amino-acid chain: DNA-directed RNA polymerase subunit alpha (336 aa).

The tract at residues 1 to 234 is alpha N-terminal domain (alpha-NTD); the sequence is MIEFVIPKKL…NHFKIVTEGL (234 aa). Residues 269–336 are alpha C-terminal domain (alpha-CTD); that stretch reads VYNRKIDELE…KFGLELRKGE (68 aa).

This sequence belongs to the RNA polymerase alpha chain family. Homodimer. The RNAP catalytic core consists of 2 alpha, 1 beta, 1 beta' and 1 omega subunit. When a sigma factor is associated with the core the holoenzyme is formed, which can initiate transcription.

The catalysed reaction is RNA(n) + a ribonucleoside 5'-triphosphate = RNA(n+1) + diphosphate. In terms of biological role, DNA-dependent RNA polymerase catalyzes the transcription of DNA into RNA using the four ribonucleoside triphosphates as substrates. The protein is DNA-directed RNA polymerase subunit alpha of Thermotoga petrophila (strain ATCC BAA-488 / DSM 13995 / JCM 10881 / RKU-1).